Reading from the N-terminus, the 385-residue chain is MGRCVVIGAGKASAAMAAALDTVWSDVDLSGVVVTRYGHAVPSGRIRIIEASHPVPDDMSVEAAVRIIGAVRDLGPDDLVIALISGGGSSLLVSPAAGMTLADKKAVNKALLASGATISEMNAVRKQLSGIKGGRLAQLAHPARVVTLVISDVPGDDPSEIASGPTVANDTTIDDAREIVSRYRLVLPPAAQDVLANGGARNCTGKVSSDVRMIASPSMALDAAAAVAAANGLTPVILGDALQGEARDVGTVFAGIAMSASTKGLPVRGPAVLLSGGETSVSLPADTKGRGGRNSEFLLSLAIGLDGAKGIWALSGDTDGIDGIEDAAGAMIGPDSLARMRGSGIDPRSALSRHDSYTAFKAIDDLVITGPTLTNVNDIRAILIG.

It catalyses the reaction (R)-glycerate + NAD(+) = 3-hydroxypyruvate + NADH + H(+). The enzyme catalyses (R)-glycerate + NADP(+) = 3-hydroxypyruvate + NADPH + H(+). It functions in the pathway carbohydrate acid metabolism; tartrate degradation; 3-hydroxypyruvate from D-glycerate: step 1/1. Functionally, degrades an unidentified toxic product from the first step of tartrate degradation. In Agrobacterium vitis (Rhizobium vitis), this protein is Putative hydroxypyruvate reductase (ttuD).